The primary structure comprises 209 residues: MSTELAAWLGHMGIRDRRVLDAIAALDRARFVSRDLSAEAYADRPLPIGFGQTISQPYVVAFMTEALELEGGERVLEVGTGSGYQTALLARLAGEVWSVEIVPGLAARARALLLEELGLANVHLREGDGALGWPEAAPFERILVTAAAPRVPPALRAQLAPGGRMVLPVGEAESEQVLRVVERGADGIEESEDVLPVRFVPLTHLPPAV.

S55 is a catalytic residue.

The protein belongs to the methyltransferase superfamily. L-isoaspartyl/D-aspartyl protein methyltransferase family.

It is found in the cytoplasm. The enzyme catalyses [protein]-L-isoaspartate + S-adenosyl-L-methionine = [protein]-L-isoaspartate alpha-methyl ester + S-adenosyl-L-homocysteine. Catalyzes the methyl esterification of L-isoaspartyl residues in peptides and proteins that result from spontaneous decomposition of normal L-aspartyl and L-asparaginyl residues. It plays a role in the repair and/or degradation of damaged proteins. In Anaeromyxobacter dehalogenans (strain 2CP-1 / ATCC BAA-258), this protein is Protein-L-isoaspartate O-methyltransferase.